Reading from the N-terminus, the 90-residue chain is Probable Fe(2+)-trafficking protein (90 aa).

It belongs to the Fe(2+)-trafficking protein family. As to quaternary structure, monomer.

Could be a mediator in iron transactions between iron acquisition and iron-requiring processes, such as synthesis and/or repair of Fe-S clusters in biosynthetic enzymes. This chain is Probable Fe(2+)-trafficking protein, found in Yersinia pestis bv. Antiqua (strain Antiqua).